We begin with the raw amino-acid sequence, 370 residues long: Pantothenate kinase 3 (370 aa).

Glu-138 serves as the catalytic Proton acceptor. Acetyl-CoA contacts are provided by Ser-192, Ser-195, and Arg-207.

The protein belongs to the type II pantothenate kinase family. Homodimer.

The protein resides in the cytoplasm. It carries out the reaction (R)-pantothenate + ATP = (R)-4'-phosphopantothenate + ADP + H(+). It participates in cofactor biosynthesis; coenzyme A biosynthesis; CoA from (R)-pantothenate: step 1/5. With respect to regulation, subject to allosteric regulation, exists in two distinct conformational states, a catalytically incompetent (or open) conformation stabilized by the binding of acetyl(acyl)-CoA, and a catalytically competent (or closed) conformation stabilized by ATP-binding. Inhibited by acetyl-CoA and its thioesters which act as allosteric inhibitors and compete with the ATP-binding site. In terms of biological role, catalyzes the phosphorylation of pantothenate to generate 4'-phosphopantothenate in the first and rate-determining step of coenzyme A (CoA) synthesis. In Bos taurus (Bovine), this protein is Pantothenate kinase 3 (PANK3).